We begin with the raw amino-acid sequence, 977 residues long: Receptor-like protein kinase 7 (977 aa).

An N-terminal signal peptide occupies residues 1-28 (MAPSLRNFNFFHRFSTFLVFSLFSVVSS). The Extracellular segment spans residues 29 to 608 (DDLQVLLKLK…NPSRSHGDTR (580 aa)). LRR repeat units lie at residues 71–95 (RGNV…SVCE), 96–119 (IQSL…DLKN), and 121–145 (TSLK…SLNQ). Asn73 and Asn119 each carry an N-linked (GlcNAc...) asparagine glycan. 2 N-linked (GlcNAc...) asparagine glycosylation sites follow: Asn152 and Asn167. LRR repeat units lie at residues 168-194 (ATSL…VVSL), 195-218 (KKLS…IGDL), 219-242 (TELR…ISKL), 244-265 (NLWQ…GFGN), 267-289 (KNLT…LRSL), 290-312 (TNLV…EFGE), 313-337 (FKDL…LGSL), 339-361 (DFDF…MCKN), 362-385 (GKMK…YANC), 386-409 (LTLQ…LWGL), 411-433 (KLEI…IKNG), 434-457 (KMLG…IGDT), 458-481 (ESLT…IGKL), 482-505 (KGLS…IGSC), 507-529 (MLSD…LGSL), 530-553 (PTLN…LSSL), and 555-578 (LSLL…SYNG). The N-linked (GlcNAc...) asparagine glycan is linked to Asn204. N-linked (GlcNAc...) asparagine glycosylation is found at Asn252 and Asn268. A glycan (N-linked (GlcNAc...) asparagine) is linked at Asn318. N-linked (GlcNAc...) asparagine glycosylation is found at Asn373 and Asn399. 2 N-linked (GlcNAc...) asparagine glycosylation sites follow: Asn536 and Asn577. Residues 609-629 (VFVLCIVFGLLILLASLVFFL) traverse the membrane as a helical segment. The Cytoplasmic portion of the chain corresponds to 630–977 (YLKKTEKKEG…ESDVKVKEIS (348 aa)). Residues 666–959 (IKEENLIGRG…QMIEDAEPCR (294 aa)) form the Protein kinase domain. ATP is bound by residues 672–680 (IGRGGCGDV) and Lys694. Asp805 serves as the catalytic Proton acceptor.

It belongs to the protein kinase superfamily. Ser/Thr protein kinase family. In terms of assembly, interacts with PIP1. Expressed in roots, stems and dry seeds. Expressed at junctions between organs, such as the insertion zones of stamens, petals and sepals, the transition zones of floral stem and pedicel, pedicel and silique, and floral stem and cauline leaves.

Its subcellular location is the membrane. The enzyme catalyses L-seryl-[protein] + ATP = O-phospho-L-seryl-[protein] + ADP + H(+). It catalyses the reaction L-threonyl-[protein] + ATP = O-phospho-L-threonyl-[protein] + ADP + H(+). Plays a role in pattern-triggered immunity (PTI) signaling induced by pathogen-associated molecular patterns (PAMPs). Acts as a receptor for PIP1 defense peptide. PIP1 is an endogenous secreted peptide that acts as elicitor of immune response and positive regulator of defense response. Involved in the control of seed germination speed, in tolerance to oxidative stress and in maintaining seed longevity. The protein is Receptor-like protein kinase 7 of Arabidopsis thaliana (Mouse-ear cress).